A 173-amino-acid chain; its full sequence is Crossover junction endodeoxyribonuclease RuvC (173 aa).

Residues D8, E67, and D139 contribute to the active site. The Mg(2+) site is built by D8, E67, and D139.

The protein belongs to the RuvC family. Homodimer which binds Holliday junction (HJ) DNA. The HJ becomes 2-fold symmetrical on binding to RuvC with unstacked arms; it has a different conformation from HJ DNA in complex with RuvA. In the full resolvosome a probable DNA-RuvA(4)-RuvB(12)-RuvC(2) complex forms which resolves the HJ. Mg(2+) is required as a cofactor.

The protein resides in the cytoplasm. It carries out the reaction Endonucleolytic cleavage at a junction such as a reciprocal single-stranded crossover between two homologous DNA duplexes (Holliday junction).. The RuvA-RuvB-RuvC complex processes Holliday junction (HJ) DNA during genetic recombination and DNA repair. Endonuclease that resolves HJ intermediates. Cleaves cruciform DNA by making single-stranded nicks across the HJ at symmetrical positions within the homologous arms, yielding a 5'-phosphate and a 3'-hydroxyl group; requires a central core of homology in the junction. The consensus cleavage sequence is 5'-(A/T)TT(C/G)-3'. Cleavage occurs on the 3'-side of the TT dinucleotide at the point of strand exchange. HJ branch migration catalyzed by RuvA-RuvB allows RuvC to scan DNA until it finds its consensus sequence, where it cleaves and resolves the cruciform DNA. In Yersinia enterocolitica serotype O:8 / biotype 1B (strain NCTC 13174 / 8081), this protein is Crossover junction endodeoxyribonuclease RuvC.